The chain runs to 1088 residues: Probable cellulose synthase A catalytic subunit 9 [UDP-forming] (1088 aa).

Methionine 1 is modified (N-acetylmethionine). Residues 1–283 (MNTGGRLIAG…RSSRINPYRM (283 aa)) are Cytoplasmic-facing. Positions 39, 42, 58, 61, 66, 69, 81, and 84 each coordinate Zn(2+). The RING-type; degenerate zinc-finger motif lies at 39–85 (CKICRDEIELTDNGEPFIACNECAFPTCRPCYEYERREGNQACPQCG). Residues 284-304 (LIFCRLAILGLFFHYRILHPV) traverse the membrane as a helical segment. The Extracellular segment spans residues 305–306 (ND). The chain crosses the membrane as a helical span at residues 307-327 (AFGLWLTSVICEIWFAVSWIL). The Cytoplasmic portion of the chain corresponds to 328–871 (DQFPKWYPIE…INSVVYPWTS (544 aa)). Serine 366, lysine 372, glutamate 373, aspartate 402, and lysine 543 together coordinate UDP-alpha-D-glucose. Aspartate 402 is a catalytic residue. Mn(2+) is bound by residues lysine 544 and aspartate 568. Aspartate 788 is an active-site residue. A helical transmembrane segment spans residues 872 to 892 (LPLLVYCSLPAICLLTGKFIV). Residues 893–897 (PEISN) lie on the Extracellular side of the membrane. Residues 898-918 (YAGILFLLMFMSIAVTGILEM) form a helical membrane-spanning segment. The Cytoplasmic portion of the chain corresponds to 919-933 (QWGKIGIDDWWRNEQ). A helical membrane pass occupies residues 934 to 954 (FWVIGGVSSHLFALFQGLLKV). Residues 955-983 (LAGVSTNFTVTSKAADDGEFSELYIFKWT) are Extracellular-facing. Asparagine 961 carries N-linked (GlcNAc...) asparagine glycosylation. The helical transmembrane segment at 984–1004 (SLLIPPTTLLIINIVGVIVGV) threads the bilayer. The Cytoplasmic segment spans residues 1005–1015 (SDAINNGYDSW). A helical transmembrane segment spans residues 1016–1036 (GPLFGRLFFALWVIVHLYPFL). Residues 1037–1045 (KGLLGKQDR) are Extracellular-facing. Residues 1046 to 1066 (VPTIILVWSILLASILTLLWV) form a helical membrane-spanning segment. The Cytoplasmic portion of the chain corresponds to 1067-1088 (RVNPFVSKDGPVLEICGLDCLK).

This sequence belongs to the glycosyltransferase 2 family. Plant cellulose synthase subfamily. It depends on Mn(2+) as a cofactor. Requires Zn(2+) as cofactor. In terms of tissue distribution, expressed in young plants, stems and flowers.

It is found in the cell membrane. It carries out the reaction [(1-&gt;4)-beta-D-glucosyl](n) + UDP-alpha-D-glucose = [(1-&gt;4)-beta-D-glucosyl](n+1) + UDP + H(+). Its pathway is glycan metabolism; plant cellulose biosynthesis. In terms of biological role, probable catalytic subunit of cellulose synthase terminal complexes ('rosettes'), required for beta-1,4-glucan microfibril crystallization, a major mechanism of the cell wall formation. The chain is Probable cellulose synthase A catalytic subunit 9 [UDP-forming] from Arabidopsis thaliana (Mouse-ear cress).